The sequence spans 118 residues: RNA guanine-N7 methyltransferase activating subunit (118 aa).

Thr-2 bears the N-acetylthreonine mark. The tract at residues 2 to 55 (TDTAEAVPNFEEMFASRFTENDKEYQEYLKRPPESPPIVEEWNSRAGGNQRNRG) is interaction with RNMT. A disordered region spans residues 30 to 118 (LKRPPESPPI…YNQRPPYGYY (89 aa)). At Ser-36 the chain carries Phosphoserine. The RNMT-activating domain motif lies at 36–42 (SPPIVEE). Positions 45 to 56 (SRAGGNQRNRGN) are enriched in low complexity. An RNA-binding region spans residues 56-118 (NRLQDNRQFR…YNQRPPYGYY (63 aa)). A compositionally biased stretch (basic and acidic residues) spans 57-70 (RLQDNRQFRGRDNR). The span at 76 to 93 (DNRSNQWHGRSWGNNYPQ) shows a compositional bias: polar residues. Omega-N-methylarginine is present on Arg-85. A Phosphoserine modification is found at Ser-86. Residues 98–109 (PYYPQQYGHYGY) are compositionally biased toward low complexity.

The protein belongs to the RAM family. Interacts with RNMT; this interaction enhances mRNA binding and cap methyltransferase activity.

It localises to the nucleus. Functionally, regulatory subunit of the mRNA-capping methyltransferase RNMT:RAMAC complex that methylates the N7 position of the added guanosine to the 5'-cap structure of mRNAs. Promotes the recruitment of the methyl donor, S-adenosyl-L-methionine, to RNMT. Regulates RNMT expression by a post-transcriptional stabilizing mechanism. Binds RNA. The protein is RNA guanine-N7 methyltransferase activating subunit (RAMAC) of Pongo abelii (Sumatran orangutan).